Here is a 117-residue protein sequence, read N- to C-terminus: Acrylate reductase cytochrome subunit (117 aa).

A signal peptide spans 1–22; the sequence is MKMYKLMLGLVLAGLVSLSAQA. Residues H29, C37, C40, H41, C54, C57, H58, H79, H83, C90, C93, H94, H97, C104, C107, and H108 each contribute to the heme c site.

As to quaternary structure, the ArdAB flavocytochrome c is composed of a FAD-containing subunit (ArdA) and a heme c-containing subunit (ArdB). Heme c serves as cofactor.

The protein resides in the periplasm. Its activity is regulated as follows. Methacrylate acts as a competitive inhibitor of the acrylate reductase activity and suppresses the reductase activity in dose-dependent manner. Its function is as follows. Heme c-containing subunit of the ArdAB flavocytochrome c, which catalyzes the reduction of acrylate to propanoate and supports dimethylsulfoniopropionate-dependent anaerobic respiration. In vitro, can use the artificial electron donor methyl viologen. The natural electron donor is probably a low-potential cytochrome c. Also shows weak activity toward methacrylate in vitro (at a 22-fold lower rate) but cannot use other tested 2-enoates, including crotonic, fumaric, sorbic, urocanic, cinnamic, p-coumaric, caffeic or ferulic acids. The protein catalyzes a unidirectional reaction and cannot oxidize propanoate with phenazine metasulfate and dichlorophenolindophenol as electron acceptors. This is Acrylate reductase cytochrome subunit from Shewanella woodyi (strain ATCC 51908 / MS32).